An 89-amino-acid chain; its full sequence is Small ribosomal subunit protein uS15 (89 aa).

It belongs to the universal ribosomal protein uS15 family. As to quaternary structure, part of the 30S ribosomal subunit. Forms a bridge to the 50S subunit in the 70S ribosome, contacting the 23S rRNA.

Its function is as follows. One of the primary rRNA binding proteins, it binds directly to 16S rRNA where it helps nucleate assembly of the platform of the 30S subunit by binding and bridging several RNA helices of the 16S rRNA. Forms an intersubunit bridge (bridge B4) with the 23S rRNA of the 50S subunit in the ribosome. The chain is Small ribosomal subunit protein uS15 from Klebsiella pneumoniae subsp. pneumoniae (strain ATCC 700721 / MGH 78578).